We begin with the raw amino-acid sequence, 568 residues long: Serine/threonine-protein kinase WNK2 (568 aa).

Positions 24-281 (GRYDEILGKG…ALELLQDPFL (258 aa)) constitute a Protein kinase domain. ATP is bound by residues 104 to 107 (TELF) and K154. D171 (proton acceptor) is an active-site residue. The tract at residues 453–473 (SSGEKSHHNHHEFDSSEDKSC) is disordered. Positions 463–472 (HEFDSSEDKS) are enriched in basic and acidic residues.

It belongs to the protein kinase superfamily. Ser/Thr protein kinase family. WNK subfamily. Autophosphorylated.

It catalyses the reaction L-seryl-[protein] + ATP = O-phospho-L-seryl-[protein] + ADP + H(+). The enzyme catalyses L-threonyl-[protein] + ATP = O-phospho-L-threonyl-[protein] + ADP + H(+). Regulates flowering time by modulating the photoperiod pathway. Possesses kinase activity in vitro. The sequence is that of Serine/threonine-protein kinase WNK2 (WNK2) from Arabidopsis thaliana (Mouse-ear cress).